The sequence spans 351 residues: Large ribosomal subunit protein uL3 (351 aa).

2 disordered regions span residues M1–T31 and K246–G271.

The protein belongs to the universal ribosomal protein uL3 family. As to quaternary structure, part of the 50S ribosomal subunit. Forms a cluster with proteins L14 and L24e.

Its function is as follows. One of the primary rRNA binding proteins, it binds directly near the 3'-end of the 23S rRNA, where it nucleates assembly of the 50S subunit. This is Large ribosomal subunit protein uL3 from Saccharolobus islandicus (strain M.16.27) (Sulfolobus islandicus).